The primary structure comprises 440 residues: Probable exopolygalacturonase C (440 aa).

The first 19 residues, 1-19, serve as a signal peptide directing secretion; the sequence is MSVFKASFLFLLSSSLVHG. N-linked (GlcNAc...) asparagine glycosylation is found at N82 and N99. PbH1 repeat units follow at residues 215–236, 238–259, and 265–288; these read GTNIQITDSIMYNGDDAIAVGA, SHDTLFTRNTIGYQTHGMSIGS, and TDFANISNIRFDDVTVVDGLYAAR. The active-site Proton donor is the D229. The active site involves H253. Residues N269, N301, N311, and N334 are each glycosylated (N-linked (GlcNAc...) asparagine). A disulfide bond links C387 and C393. N-linked (GlcNAc...) asparagine glycosylation is found at N417 and N432.

This sequence belongs to the glycosyl hydrolase 28 family.

Its subcellular location is the secreted. It carries out the reaction [(1-&gt;4)-alpha-D-galacturonosyl](n) + H2O = alpha-D-galacturonate + [(1-&gt;4)-alpha-D-galacturonosyl](n-1). In terms of biological role, specific in hydrolyzing the terminal glycosidic bond of polygalacturonic acid and oligogalacturonates. The chain is Probable exopolygalacturonase C (pgxC) from Aspergillus niger (strain ATCC MYA-4892 / CBS 513.88 / FGSC A1513).